A 314-amino-acid chain; its full sequence is Ribosomal protein L11 methyltransferase (314 aa).

The S-adenosyl-L-methionine site is built by Thr-161, Gly-182, Asp-204, and Asn-248.

Belongs to the methyltransferase superfamily. PrmA family.

It is found in the cytoplasm. The enzyme catalyses L-lysyl-[protein] + 3 S-adenosyl-L-methionine = N(6),N(6),N(6)-trimethyl-L-lysyl-[protein] + 3 S-adenosyl-L-homocysteine + 3 H(+). Its function is as follows. Methylates ribosomal protein L11. The sequence is that of Ribosomal protein L11 methyltransferase from Listeria welshimeri serovar 6b (strain ATCC 35897 / DSM 20650 / CCUG 15529 / CIP 8149 / NCTC 11857 / SLCC 5334 / V8).